A 335-amino-acid polypeptide reads, in one-letter code: Methionine import ATP-binding protein MetN (335 aa).

An ABC transporter domain is found at 2-241; it reads IQFQRLHKSY…PQHPTTRRFV (240 aa). An ATP-binding site is contributed by 38–45; it reads GHSGAGKS.

Belongs to the ABC transporter superfamily. Methionine importer (TC 3.A.1.24) family. As to quaternary structure, the complex is composed of two ATP-binding proteins (MetN), two transmembrane proteins (MetI) and a solute-binding protein (MetQ).

Its subcellular location is the cell inner membrane. It carries out the reaction L-methionine(out) + ATP + H2O = L-methionine(in) + ADP + phosphate + H(+). The catalysed reaction is D-methionine(out) + ATP + H2O = D-methionine(in) + ADP + phosphate + H(+). Its function is as follows. Part of the ABC transporter complex MetNIQ involved in methionine import. Responsible for energy coupling to the transport system. The sequence is that of Methionine import ATP-binding protein MetN from Xanthomonas campestris pv. campestris (strain 8004).